Reading from the N-terminus, the 158-residue chain is MNQFTHINTNGEANMVDVSMKQETVRVARAEAFVSMNAETLQMIISGNHHKGDVFATARIAGIQAAKRTWELIPLCHPLLLSKVEVQLEALPETNQVRIESLCKLTGKTGVEMEALTAASVAALTIYDMCKAVQKDMVIENVRLLHKSGGKSGEFNAE.

Substrate is bound by residues 75 to 77 (LCH) and 113 to 114 (ME). Aspartate 128 is an active-site residue.

This sequence belongs to the MoaC family. In terms of assembly, homohexamer; trimer of dimers.

The catalysed reaction is (8S)-3',8-cyclo-7,8-dihydroguanosine 5'-triphosphate = cyclic pyranopterin phosphate + diphosphate. Its pathway is cofactor biosynthesis; molybdopterin biosynthesis. Its function is as follows. Catalyzes the conversion of (8S)-3',8-cyclo-7,8-dihydroguanosine 5'-triphosphate to cyclic pyranopterin monophosphate (cPMP). In Actinobacillus pleuropneumoniae serotype 5b (strain L20), this protein is Cyclic pyranopterin monophosphate synthase.